Reading from the N-terminus, the 116-residue chain is Iron-sulfur cluster insertion protein ErpA (116 aa).

Positions 44, 108, and 110 each coordinate iron-sulfur cluster.

It belongs to the HesB/IscA family. In terms of assembly, homodimer. The cofactor is iron-sulfur cluster.

Its function is as follows. Required for insertion of 4Fe-4S clusters for at least IspG. The sequence is that of Iron-sulfur cluster insertion protein ErpA from Pseudomonas putida (strain ATCC 47054 / DSM 6125 / CFBP 8728 / NCIMB 11950 / KT2440).